Reading from the N-terminus, the 295-residue chain is Protease HtpX (295 aa).

2 helical membrane-spanning segments follow: residues 4 to 24 (ILLF…TLSL) and 41 to 61 (SSLL…SLFI). His-147 contributes to the Zn(2+) binding site. The active site involves Glu-148. Zn(2+) is bound at residue His-151. 2 consecutive transmembrane segments (helical) span residues 158–178 (VTLA…ARII) and 199–219 (VATI…VMWF). Glu-224 is a Zn(2+) binding site.

Belongs to the peptidase M48B family. Zn(2+) is required as a cofactor.

The protein resides in the cell inner membrane. The polypeptide is Protease HtpX (Pseudomonas putida (strain W619)).